Consider the following 209-residue polypeptide: Small ribosomal subunit protein mS23 (209 aa).

The protein belongs to the mitochondrion-specific ribosomal protein mS23 family. Component of the mitochondrial small ribosomal subunit.

The protein localises to the mitochondrion. This Sclerotinia sclerotiorum (strain ATCC 18683 / 1980 / Ss-1) (White mold) protein is Small ribosomal subunit protein mS23 (rsm25).